Reading from the N-terminus, the 634-residue chain is tRNA uridine 5-carboxymethylaminomethyl modification enzyme MnmG (634 aa).

14 to 19 (GGGHAG) provides a ligand contact to FAD. 279–293 (GPRYCPSIEDKVVRF) is an NAD(+) binding site.

Belongs to the MnmG family. As to quaternary structure, homodimer. Heterotetramer of two MnmE and two MnmG subunits. The cofactor is FAD.

It is found in the cytoplasm. NAD-binding protein involved in the addition of a carboxymethylaminomethyl (cmnm) group at the wobble position (U34) of certain tRNAs, forming tRNA-cmnm(5)s(2)U34. The protein is tRNA uridine 5-carboxymethylaminomethyl modification enzyme MnmG of Xanthomonas campestris pv. campestris (strain 8004).